The chain runs to 150 residues: D-aminoacyl-tRNA deacylase (150 aa).

Positions Gly-138–Pro-139 match the Gly-cisPro motif, important for rejection of L-amino acids motif.

The protein belongs to the DTD family. As to quaternary structure, homodimer.

Its subcellular location is the cytoplasm. The catalysed reaction is glycyl-tRNA(Ala) + H2O = tRNA(Ala) + glycine + H(+). It catalyses the reaction a D-aminoacyl-tRNA + H2O = a tRNA + a D-alpha-amino acid + H(+). Its function is as follows. An aminoacyl-tRNA editing enzyme that deacylates mischarged D-aminoacyl-tRNAs. Also deacylates mischarged glycyl-tRNA(Ala), protecting cells against glycine mischarging by AlaRS. Acts via tRNA-based rather than protein-based catalysis; rejects L-amino acids rather than detecting D-amino acids in the active site. By recycling D-aminoacyl-tRNA to D-amino acids and free tRNA molecules, this enzyme counteracts the toxicity associated with the formation of D-aminoacyl-tRNA entities in vivo and helps enforce protein L-homochirality. In Phocaeicola vulgatus (strain ATCC 8482 / DSM 1447 / JCM 5826 / CCUG 4940 / NBRC 14291 / NCTC 11154) (Bacteroides vulgatus), this protein is D-aminoacyl-tRNA deacylase.